We begin with the raw amino-acid sequence, 318 residues long: Ribonuclease Z (318 aa).

7 residues coordinate Zn(2+): His-62, His-64, Asp-66, His-67, His-144, Asp-215, and His-273. The active-site Proton acceptor is the Asp-66.

This sequence belongs to the RNase Z family. In terms of assembly, homodimer. Requires Zn(2+) as cofactor.

The enzyme catalyses Endonucleolytic cleavage of RNA, removing extra 3' nucleotides from tRNA precursor, generating 3' termini of tRNAs. A 3'-hydroxy group is left at the tRNA terminus and a 5'-phosphoryl group is left at the trailer molecule.. In terms of biological role, zinc phosphodiesterase, which displays some tRNA 3'-processing endonuclease activity. Probably involved in tRNA maturation, by removing a 3'-trailer from precursor tRNA. The protein is Ribonuclease Z of Prochlorococcus marinus (strain MIT 9303).